Consider the following 451-residue polypeptide: MSFRSIVRDVRDSFGSLSRRSFEVRISGLPGLSGHHRGKSLGSLSELRDRPVVVDQSRWVGLPPELLRDVMKRLEEGESNWPSRKDVVACAAVCRTWREICKDIVQSPEICGKLTFPVSLKQPGPRDGLIQCFIKRDKSKLTYYLYLCLSPAVLSENGKFLLAAKRNRRATSTEYIISVDSKNISRSSNGYVGKMRSNFLGTKFVVYDTQPPYNAGSLMSCQHGSRRISSRRVSPKLPTGSYPIAHVKYELNVLGTRGPRRMQCTMHSIPASAVDPEGVVPGQPEQLLPGPFEESFRSTNTSSRFSFMDRSLDFSSSRFSEISGSANQQGEDDIPEAKERPLVLRNKVPRWHEQLQCWCLNFRGRVTVASVKNFQLIAAASSESSQLEQQQQQQQQNHASSSSSASDHGKVILQFGKVGKDMFTMDYRYPLSAFQAFAICLTSFDTKLACE.

The region spanning 57 to 112 (SRWVGLPPELLRDVMKRLEEGESNWPSRKDVVACAAVCRTWREICKDIVQSPEICG) is the F-box domain. Residues 387-406 (LEQQQQQQQQNHASSSSSAS) are compositionally biased toward low complexity. Residues 387–407 (LEQQQQQQQQNHASSSSSASD) are disordered.

It belongs to the TUB family. In terms of tissue distribution, ubiquitous.

In Oryza sativa subsp. japonica (Rice), this protein is Tubby-like F-box protein 12 (TULP12).